We begin with the raw amino-acid sequence, 287 residues long: Probable ribosomal RNA small subunit methyltransferase A (287 aa).

S-adenosyl-L-methionine is bound by residues H29, L31, G56, E77, D102, and N117.

This sequence belongs to the class I-like SAM-binding methyltransferase superfamily. rRNA adenine N(6)-methyltransferase family. RsmA subfamily.

Its subcellular location is the cytoplasm. Functionally, specifically dimethylates two adjacent adenosines in the loop of a conserved hairpin near the 3'-end of 16S rRNA in the 30S particle. May play a critical role in biogenesis of 30S subunits. The sequence is that of Probable ribosomal RNA small subunit methyltransferase A from Methanosarcina barkeri (strain Fusaro / DSM 804).